The following is a 331-amino-acid chain: MNEPTYNYNDFLMPALADGQPDISIEISEITKKQWNQLIGIHEVVVYKDCRKLFPAAKFSVRGLDPALLYSVEICFDVLSPFTFSYNKKLEKWIPTKTPVNCQSSALSSMICETGDWFMNGDMDFGALNITSSHEKAKEKIEQNRIAVCLSSRTMYQIRVVLYEMQNDELIYLKETKFDEMIFITCTEYRGQVNRELKKSMNRFSRKRKYEISGTKCQRSKRPAKLPVESLDEKELKNAEKGIMSLLESSPSSPSYLYQYQYNSPQSIPSSIYDSLYPSSPEEYQMVHTFPQTDQLSPSFQTSPTVHYDFYNQQYYDNSFHENYFQSYNRL.

The T-box DNA-binding region spans 29–210 (EITKKQWNQL…MNRFSRKRKY (182 aa)).

The protein localises to the nucleus. In Caenorhabditis elegans, this protein is Putative T-box protein 36 (tbx-36).